Consider the following 285-residue polypeptide: 2-dehydro-3-deoxyphosphooctonate aldolase (285 aa).

It belongs to the KdsA family.

Its subcellular location is the cytoplasm. It catalyses the reaction D-arabinose 5-phosphate + phosphoenolpyruvate + H2O = 3-deoxy-alpha-D-manno-2-octulosonate-8-phosphate + phosphate. It participates in carbohydrate biosynthesis; 3-deoxy-D-manno-octulosonate biosynthesis; 3-deoxy-D-manno-octulosonate from D-ribulose 5-phosphate: step 2/3. The protein operates within bacterial outer membrane biogenesis; lipopolysaccharide biosynthesis. The protein is 2-dehydro-3-deoxyphosphooctonate aldolase of Acidovorax sp. (strain JS42).